Reading from the N-terminus, the 84-residue chain is uncharacterized protein (84 aa).

This is an uncharacterized protein from Bacillus subtilis (strain 168).